The primary structure comprises 171 residues: NADH-quinone oxidoreductase subunit B (171 aa).

Residues Cys39, Cys40, Cys105, and Cys134 each coordinate [4Fe-4S] cluster.

This sequence belongs to the complex I 20 kDa subunit family. As to quaternary structure, NDH-1 is composed of 14 different subunits. Subunits NuoB, C, D, E, F, and G constitute the peripheral sector of the complex. Requires [4Fe-4S] cluster as cofactor.

The protein localises to the cell inner membrane. It carries out the reaction a quinone + NADH + 5 H(+)(in) = a quinol + NAD(+) + 4 H(+)(out). In terms of biological role, NDH-1 shuttles electrons from NADH, via FMN and iron-sulfur (Fe-S) centers, to quinones in the respiratory chain. The immediate electron acceptor for the enzyme in this species is believed to be ubiquinone. Couples the redox reaction to proton translocation (for every two electrons transferred, four hydrogen ions are translocated across the cytoplasmic membrane), and thus conserves the redox energy in a proton gradient. This Aliarcobacter butzleri (strain RM4018) (Arcobacter butzleri) protein is NADH-quinone oxidoreductase subunit B.